A 375-amino-acid polypeptide reads, in one-letter code: Neutral protease 2 homolog MGYG_00813 (375 aa).

The N-terminal stretch at 1 to 19 is a signal peptide; sequence MQVIVALAALSSLAAPALG. Positions 20–190 are excised as a propeptide; it reads FSIPRGVPVS…SGPLTRIGKR (171 aa). Cystine bridges form between Cys-198–Cys-268 and Cys-275–Cys-293. Position 318 (His-318) interacts with Zn(2+). The active site involves Glu-319. 2 residues coordinate Zn(2+): His-322 and Asp-333.

This sequence belongs to the peptidase M35 family. Zn(2+) serves as cofactor.

Its subcellular location is the secreted. The enzyme catalyses Preferential cleavage of bonds with hydrophobic residues in P1'. Also 3-Asn-|-Gln-4 and 8-Gly-|-Ser-9 bonds in insulin B chain.. Its function is as follows. Secreted metalloproteinase that allows assimilation of proteinaceous substrates. Shows high activities on basic nuclear substrates such as histone and protamine. May be involved in virulence. This chain is Neutral protease 2 homolog MGYG_00813, found in Arthroderma gypseum (strain ATCC MYA-4604 / CBS 118893) (Microsporum gypseum).